Reading from the N-terminus, the 681-residue chain is Mating-type protein beta1-1 (681 aa).

The segment at residues 165–227 (DKNEPTSPTP…DARRRIGWNE (63 aa)) is a DNA-binding region (homeobox; TALE-type). Over residues 307–318 (LKNDEARRKREA) the composition is skewed to basic and acidic residues. 3 disordered regions span residues 307 to 341 (LKND…SPAS), 353 to 381 (AIDS…SPLC), and 394 to 466 (SPVK…SDPF). Residues 413 to 430 (TSAAPSPQPSLLPKLTPT) show a composition bias toward low complexity.

This sequence belongs to the TALE/M-ATYP homeobox family. In terms of assembly, may dimerize.

It is found in the nucleus. In terms of biological role, has a major regulatory role in sexual and asexual development. It may bind DNA itself or it may have a role in preventing DNA-binding of another protein. The protein is Mating-type protein beta1-1 of Coprinopsis cinerea (Inky cap fungus).